Here is a 245-residue protein sequence, read N- to C-terminus: Acetylglutamate kinase (245 aa).

Substrate contacts are provided by residues glycine 41 to glycine 42, arginine 63, and asparagine 156.

The protein belongs to the acetylglutamate kinase family. ArgB subfamily.

The protein localises to the cytoplasm. The enzyme catalyses N-acetyl-L-glutamate + ATP = N-acetyl-L-glutamyl 5-phosphate + ADP. It participates in amino-acid biosynthesis; L-arginine biosynthesis; N(2)-acetyl-L-ornithine from L-glutamate: step 2/4. Catalyzes the ATP-dependent phosphorylation of N-acetyl-L-glutamate. This Staphylococcus epidermidis (strain ATCC 35984 / DSM 28319 / BCRC 17069 / CCUG 31568 / BM 3577 / RP62A) protein is Acetylglutamate kinase.